Consider the following 377-residue polypeptide: Polar flagellin F (377 aa).

Coiled coils occupy residues 98-131 (QSAN…ETTS) and 302-339 (DSQR…IQDT).

This sequence belongs to the bacterial flagellin family. In terms of assembly, heteromer of multiple flagellin subunits including FlaA, FlaB/D, FlaC, FlaE and FlaF.

It is found in the secreted. The protein resides in the bacterial flagellum. Flagellin is the subunit protein which polymerizes to form the filaments of bacterial flagella. In Vibrio parahaemolyticus serotype O3:K6 (strain RIMD 2210633), this protein is Polar flagellin F (flaF).